We begin with the raw amino-acid sequence, 486 residues long: Aspartyl/glutamyl-tRNA(Asn/Gln) amidotransferase subunit B (486 aa).

This sequence belongs to the GatB/GatE family. GatB subfamily. As to quaternary structure, heterotrimer of A, B and C subunits.

It catalyses the reaction L-glutamyl-tRNA(Gln) + L-glutamine + ATP + H2O = L-glutaminyl-tRNA(Gln) + L-glutamate + ADP + phosphate + H(+). The enzyme catalyses L-aspartyl-tRNA(Asn) + L-glutamine + ATP + H2O = L-asparaginyl-tRNA(Asn) + L-glutamate + ADP + phosphate + 2 H(+). Functionally, allows the formation of correctly charged Asn-tRNA(Asn) or Gln-tRNA(Gln) through the transamidation of misacylated Asp-tRNA(Asn) or Glu-tRNA(Gln) in organisms which lack either or both of asparaginyl-tRNA or glutaminyl-tRNA synthetases. The reaction takes place in the presence of glutamine and ATP through an activated phospho-Asp-tRNA(Asn) or phospho-Glu-tRNA(Gln). The chain is Aspartyl/glutamyl-tRNA(Asn/Gln) amidotransferase subunit B from Azoarcus sp. (strain BH72).